We begin with the raw amino-acid sequence, 98 residues long: Large ribosomal subunit protein bL27 (98 aa).

Positions Met1 to Phe13 are excised as a propeptide.

It belongs to the bacterial ribosomal protein bL27 family. The N-terminus is cleaved by ribosomal processing cysteine protease Prp.

The chain is Large ribosomal subunit protein bL27 from Mycoplasmoides gallisepticum (strain R(low / passage 15 / clone 2)) (Mycoplasma gallisepticum).